Consider the following 422-residue polypeptide: Keratan-sulfate endo-1,4-beta-galactosidase (422 aa).

An N-terminal signal peptide occupies residues 1 to 46; the sequence is MRKTKFWLVLSLIATSLSIFACKKDSTATKNPIPEVSKAKASTKLL. In terms of domain architecture, GH16 spans 47–292; it reads NATTVATTDY…YVRVYKLPLF (246 aa). The active-site Nucleophile is the E171. The Proton donor role is filled by E176. The 116-residue stretch at 291–406 folds into the CBM-cenC domain; the sequence is LFSNGDFESG…NTTATVYFYK (116 aa).

It belongs to the glycosyl hydrolase 16 family.

It localises to the secreted. The catalysed reaction is Endohydrolysis of (1-&gt;4)-beta-D-galactosidic linkages in keratan sulfate.. In terms of biological role, hydrolyzes internal endo-beta-galactosyl linkages in keratan sulfate and in various neolacto-type glycosphingolipids, producing sulfated and non-sulfated disaccharides, and glucosylceramides respectivly. This chain is Keratan-sulfate endo-1,4-beta-galactosidase, found in Sphingobacterium multivorum.